The chain runs to 101 residues: Replication restart protein PriB (101 aa).

An SSB domain is found at 1 to 101 (MTTNSLVLSG…IHAENVELKT (101 aa)).

It belongs to the PriB family. Homodimer. Interacts with PriA and DnaT. Component of the replication restart primosome. Primosome assembly occurs via a 'hand-off' mechanism. PriA binds to replication forks, subsequently PriB then DnaT bind; DnaT then displaces ssDNA to generate the helicase loading substrate.

Functionally, involved in the restart of stalled replication forks, which reloads the replicative helicase on sites other than the origin of replication; the PriA-PriB pathway is the major replication restart pathway. During primosome assembly it facilitates complex formation between PriA and DnaT on DNA; stabilizes PriA on DNA. Stimulates the DNA unwinding activity of PriA helicase. The protein is Replication restart protein PriB of Shewanella putrefaciens (strain CN-32 / ATCC BAA-453).